The following is a 405-amino-acid chain: S-adenosylmethionine:tRNA ribosyltransferase-isomerase (405 aa).

This sequence belongs to the QueA family. In terms of assembly, monomer.

Its subcellular location is the cytoplasm. It carries out the reaction 7-aminomethyl-7-carbaguanosine(34) in tRNA + S-adenosyl-L-methionine = epoxyqueuosine(34) in tRNA + adenine + L-methionine + 2 H(+). It functions in the pathway tRNA modification; tRNA-queuosine biosynthesis. Transfers and isomerizes the ribose moiety from AdoMet to the 7-aminomethyl group of 7-deazaguanine (preQ1-tRNA) to give epoxyqueuosine (oQ-tRNA). This chain is S-adenosylmethionine:tRNA ribosyltransferase-isomerase, found in Psychrobacter cryohalolentis (strain ATCC BAA-1226 / DSM 17306 / VKM B-2378 / K5).